A 261-amino-acid chain; its full sequence is Rhomboid-type serine protease 2 (261 aa).

A run of 5 helical transmembrane segments spans residues leucine 17–isoleucine 37, leucine 58–valine 78, isoleucine 94–leucine 114, proline 116–valine 136, and leucine 155–valine 175. Serine 124 serves as the catalytic Nucleophile. Histidine 177 is a catalytic residue.

This sequence belongs to the peptidase S54 family.

It is found in the golgi apparatus membrane. It localises to the golgi apparatus. The protein resides in the cis-Golgi network membrane. The enzyme catalyses Cleaves type-1 transmembrane domains using a catalytic dyad composed of serine and histidine that are contributed by different transmembrane domains.. Its function is as follows. Probable rhomboid-type serine protease that catalyzes intramembrane proteolysis. This chain is Rhomboid-type serine protease 2 (RBD2), found in Eremothecium gossypii (strain ATCC 10895 / CBS 109.51 / FGSC 9923 / NRRL Y-1056) (Yeast).